The primary structure comprises 1582 residues: ATP-binding cassette sub-family C member 8 (1582 aa).

Over 1-30 (MPLAFCGTENHSAAYRVDQGVLNNGCFVDA) the chain is Extracellular. The cysteines at positions 6 and 26 are disulfide-linked. Residue asparagine 10 is glycosylated (N-linked (GlcNAc...) asparagine). Residues 31–47 (LNVVPHVFLLFITFPIL) traverse the membrane as a helical segment. Topologically, residues 48-72 (FIGWGSQSSKVHIHHSTWLHFPGHN) are cytoplasmic. A helical membrane pass occupies residues 73–89 (LRWILTFILLFVLVCEI). The Extracellular segment spans residues 90 to 106 (AEGILSDGVTESRHLHL). A helical membrane pass occupies residues 107–123 (YMPAGMAFMAAITSVVY). The Cytoplasmic portion of the chain corresponds to 124–136 (YHNIETSNFPKLL). A helical membrane pass occupies residues 137–153 (IALLIYWTLAFITKTIK). The Extracellular segment spans residues 154 to 169 (FVKFYDHAIGFSQLRF). A helical transmembrane segment spans residues 170 to 186 (CLTGLLVILYGMLLLVE). The Cytoplasmic portion of the chain corresponds to 187–303 (VNVIRVRRYI…AFGRRLILSS (117 aa)). The ABC transmembrane type-1 1 domain occupies 299–602 (LILSSTFRIL…LSSVVRSTVK (304 aa)). Residues 304-319 (TFRILADLLGFAGPLC) traverse the membrane as a helical segment. Topologically, residues 320-356 (IFGIVDHLGKENHVFQPKTQFLGVYFVSSQEFLGNAY) are extracellular. Residues 357 to 372 (VLAVLLFLALLLQRTF) traverse the membrane as a helical segment. Residues 373–438 (LQASYYVAIE…MWFFFLCPNL (66 aa)) are Cytoplasmic-facing. The chain crosses the membrane as a helical span at residues 439–454 (WTMPVQIIVGVILLYY). Residues 455–460 (ILGVSA) are Extracellular-facing. Residues 461–473 (LIGAAVIILLAPV) form a helical membrane-spanning segment. The Cytoplasmic segment spans residues 474–541 (QYFVATKLSQ…SLRAFAVYTS (68 aa)). A helical membrane pass occupies residues 542–557 (ISIFMNTAIPIAAVLI). Over 558–576 (TFVGHVSFFKESDLSPSVA) the chain is Extracellular. Residues 577–592 (FASLSLFHILVTPLFL) form a helical membrane-spanning segment. Over 593–1013 (LSSVVRSTVK…YLSSAGILLL (421 aa)) the chain is Cytoplasmic. Positions 679 to 930 (VQIIGGFFTW…ECQLFEHWKT (252 aa)) constitute an ABC transporter 1 domain. 4 residues coordinate ATP: tryptophan 688, glycine 716, serine 720, and serine 721. Mg(2+) is bound at residue serine 720. A disordered region spans residues 741 to 766 (SNLPDSEGEDPSSPERETAAGSDIRS). Glutamine 775 contacts Mg(2+). Positions 939-950 (LEKETVMERKAS) are enriched in basic and acidic residues. A disordered region spans residues 939–962 (LEKETVMERKASEPSQGLPRAMSS). Positions 1013–1307 (LSLLVFSQLL…MVRNLADMEI (295 aa)) constitute an ABC transmembrane type-1 2 domain. The helical transmembrane segment at 1014 to 1031 (SLLVFSQLLKHMVLVAID) threads the bilayer. The Extracellular segment spans residues 1032 to 1067 (YWLAKWTDSALVLSPAARNCSLSQECDLDQSVYAMV). Asparagine 1050 is a glycosylation site (N-linked (GlcNAc...) asparagine). A helical membrane pass occupies residues 1068 to 1084 (FTLLCSLGIVLCLVTSV). Topologically, residues 1085–1143 (TVEWTGLKVAKRLHRSLLNRIILAPMRFFETTPLGSILNRFSSDCNTIDQHIPSTLECL) are cytoplasmic. The chain crosses the membrane as a helical span at residues 1144-1161 (SRSTLLCVSALTVISYVT). A topological domain (extracellular) is located at residue proline 1162. A helical membrane pass occupies residues 1163–1175 (VFLVALLPLAVVC). Over 1176-1249 (YFIQKYFRVA…FLTAANRWLE (74 aa)) the chain is Cytoplasmic. Residues 1250–1265 (VCMEYIGACVVLIAAA) traverse the membrane as a helical segment. At 1266 to 1281 (TSISNSLHRELSAGLV) the chain is on the extracellular side. A helical membrane pass occupies residues 1282-1297 (GLGLTYALMVSNYLNW). Over 1298–1582 (MVRNLADMEI…VFASFVRADK (285 aa)) the chain is Cytoplasmic. The ABC transporter 2 domain occupies 1345-1579 (IQIQNLSVRY…KDSVFASFVR (235 aa)). The ADP site is built by threonine 1381, glycine 1382, glycine 1384, lysine 1385, serine 1386, and serine 1387. Serine 1483 provides a ligand contact to ATP.

It belongs to the ABC transporter superfamily. ABCC family. Conjugate transporter (TC 3.A.1.208) subfamily. As to quaternary structure, forms an heterooctamer with KCNJ11; four ABCC8/SUR1 molecules interact with one KCNJ11 homotetramer.

It is found in the cell membrane. KATP channels are regulated by cytoplasmic ATP/ADP ratios; ATP inhibits the channel by closing the pore, while ADP activates the channel. Activated by phosphatidylinositol 4,5-biphosphate (PtdIns(4,5)P2). Functionally, regulator subunit of pancreatic ATP-sensitive potassium channel (KATP), playing a major role in the regulation of insulin release. In pancreatic cells, it forms KATP channels with KCNJ11; KCNJ11 forms the channel pore while ABCC8 is required for activation and regulation. In Cricetus cricetus (Black-bellied hamster), this protein is ATP-binding cassette sub-family C member 8 (ABCC8).